Here is a 358-residue protein sequence, read N- to C-terminus: Uroporphyrinogen decarboxylase (358 aa).

Substrate-binding positions include 29-33 (RQAGR), phenylalanine 48, aspartate 79, tyrosine 155, serine 210, and histidine 330.

This sequence belongs to the uroporphyrinogen decarboxylase family. In terms of assembly, homodimer.

Its subcellular location is the cytoplasm. The catalysed reaction is uroporphyrinogen III + 4 H(+) = coproporphyrinogen III + 4 CO2. The protein operates within porphyrin-containing compound metabolism; protoporphyrin-IX biosynthesis; coproporphyrinogen-III from 5-aminolevulinate: step 4/4. Catalyzes the decarboxylation of four acetate groups of uroporphyrinogen-III to yield coproporphyrinogen-III. The polypeptide is Uroporphyrinogen decarboxylase (Bordetella parapertussis (strain 12822 / ATCC BAA-587 / NCTC 13253)).